A 1203-amino-acid polypeptide reads, in one-letter code: Transmembrane channel-like protein 2 (1203 aa).

2 disordered regions span residues 1 to 39 and 64 to 90; these read MPKSGAHQPLVRHDTDDGGETGQSVKSLADVSEEEIDSR and PHTRLGNPNFDDDDDEFDEEDDKEASK. The segment covering 73 to 86 has biased composition (acidic residues); that stretch reads FDDDDDEFDEEDDK. Residues 191–213 traverse the membrane as a helical segment; the sequence is VLGVNITITFIMCMFVVIPEWLA. N-linked (GlcNAc...) asparagine glycosylation is present at N225. Helical transmembrane passes span 276–298, 369–391, 406–428, 441–463, 665–687, and 714–736; these read YRVPVAYFFCNIFILGFSLFIIL, FVARVLTNLFICAMYVFSIWAIM, ATAITISLITLVFPNIFDLLGKI, LGRVLVLYILNYYTLIYSLMLQL, MIWLGLFFVPLLPMLNNIKLIIL, and FFFALLILFLFLCTLPVGFVIAS. The N-linked (GlcNAc...) asparagine glycan is linked to N748. A helical transmembrane segment spans residues 780–802; it reads IIIPVLVLLSLVIYFLIAMVTGL. Disordered regions lie at residues 826 to 908, 927 to 1039, 1059 to 1087, and 1112 to 1203; these read ELAG…SLPP, KYGR…IEKQ, ATVENSSQDPTRPPSTDDSLGDPALHEPL, and NDET…SDND. The span at 865 to 874 shows a compositional bias: polar residues; the sequence is NRSTAKSVSG. The span at 898–908 shows a compositional bias: low complexity; that stretch reads DSESTTSSLPP. Residues 927-945 show a composition bias toward basic and acidic residues; sequence KYGRHDDIEMEEGGGRLRE. Composition is skewed to low complexity over residues 973–997 and 1022–1035; these read QSFDQNSQSASASSSKSTTTAPSNS and SASSSSSSHQPSSS. Residues 1061 to 1076 show a composition bias toward polar residues; it reads VENSSQDPTRPPSTDD. Composition is skewed to basic and acidic residues over residues 1133 to 1147 and 1172 to 1203; these read SPRELKRLKREKDQQ and PPSEKNDSDSSNRKYEMRVEKSPKKPKKSDND.

The protein belongs to the TMC family.

The protein resides in the membrane. Functionally, probable ion channel. The protein is Transmembrane channel-like protein 2 (tmc-2) of Caenorhabditis elegans.